A 117-amino-acid polypeptide reads, in one-letter code: UPF0251 protein DehaBAV1_0135 (117 aa).

The protein belongs to the UPF0251 family.

The sequence is that of UPF0251 protein DehaBAV1_0135 from Dehalococcoides mccartyi (strain ATCC BAA-2100 / JCM 16839 / KCTC 5957 / BAV1).